The primary structure comprises 300 residues: NAD kinase (300 aa).

The active-site Proton acceptor is Asp75. Residues 75 to 76, 149 to 150, Arg177, Asp179, 190 to 195, Ala214, and Gln248 contribute to the NAD(+) site; these read DG, ND, and TAYALS.

The protein belongs to the NAD kinase family. It depends on a divalent metal cation as a cofactor.

The protein localises to the cytoplasm. The enzyme catalyses NAD(+) + ATP = ADP + NADP(+) + H(+). Its function is as follows. Involved in the regulation of the intracellular balance of NAD and NADP, and is a key enzyme in the biosynthesis of NADP. Catalyzes specifically the phosphorylation on 2'-hydroxyl of the adenosine moiety of NAD to yield NADP. The polypeptide is NAD kinase (Burkholderia orbicola (strain MC0-3)).